The primary structure comprises 197 residues: Imidazoleglycerol-phosphate dehydratase (197 aa).

The protein belongs to the imidazoleglycerol-phosphate dehydratase family.

It is found in the cytoplasm. The enzyme catalyses D-erythro-1-(imidazol-4-yl)glycerol 3-phosphate = 3-(imidazol-4-yl)-2-oxopropyl phosphate + H2O. The protein operates within amino-acid biosynthesis; L-histidine biosynthesis; L-histidine from 5-phospho-alpha-D-ribose 1-diphosphate: step 6/9. The sequence is that of Imidazoleglycerol-phosphate dehydratase from Pseudomonas fluorescens (strain ATCC BAA-477 / NRRL B-23932 / Pf-5).